Here is a 723-residue protein sequence, read N- to C-terminus: Malonamoyl-CoA synthetase vrtB (723 aa).

This sequence belongs to the ATP-dependent AMP-binding enzyme family.

It functions in the pathway secondary metabolite biosynthesis; terpenoid biosynthesis. In terms of biological role, malonamoyl-CoA synthetase; part of the gene cluster that mediates the biosynthesis of viridicatumtoxin, a tetracycline-like fungal meroterpenoid with a unique, fused spirobicyclic ring system. The first step of the pathway is the production of the malonamoyl-CoA starter unit for the polyketide synthase vrtA. The aldolase vrtJ may be involved in the synthesis of the malonamate substrate for malonamoyl-CoA synthetase vrtB. The polyketide synthase vrtA then may utilize the malonamoyl-CoA starter unit, followed by sequential condensation of eight malonyl-CoA units to form the polyketide backbone. The cyclization of the last ring could be mediated by the lactamase-like protein vrtG. The proposed post-PKS tailoring steps are a hydroxylation at C5 catalyzed the cytochrome P450 monooxygenase vrtE, a hydroxylation at C12a catalyzed by VrtH and/or VrtI, and an O-methylation by the O-methyltransferase vrtF. VrtC is then proposed to catalyze the transfer of a geranyl group synthesized by vrtD to the aromatic C ring of the tetracyclic polyketide intermediate of viridicatumtoxin to yield previridicatumtoxin. Finally, the cytochrome P450 monooxygenase vrtK catalyzes the spirocyclization of the geranyl moiety of previridicatumtoxin to afford viridicatumtoxin. The sequence is that of Malonamoyl-CoA synthetase vrtB from Penicillium aethiopicum.